The following is a 291-amino-acid chain: Oxidative stress-responsive serine-rich protein 1 (291 aa).

The segment at 29–139 is disordered; sequence ISLSVGEGPS…NAGENSTSLD (111 aa). Residues 65–83 are compositionally biased toward basic residues; the sequence is STRKSSRGAVRTQRRRRSK. A compositionally biased stretch (polar residues) spans 95–105; it reads CSTTAPPSSSQ. Residue Thr143 is modified to Phosphothreonine.

This is Oxidative stress-responsive serine-rich protein 1 (Oser1) from Mus musculus (Mouse).